Consider the following 284-residue polypeptide: D-tagatose-1,6-bisphosphate aldolase subunit GatY (284 aa).

The Proton donor role is filled by D82. Zn(2+) contacts are provided by H83 and H180. G181 is a dihydroxyacetone phosphate binding site. H208 contributes to the Zn(2+) binding site. Dihydroxyacetone phosphate is bound by residues 209–211 (GAS) and 230–233 (NVAT).

This sequence belongs to the class II fructose-bisphosphate aldolase family. TagBP aldolase GatY subfamily. In terms of assembly, forms a complex with GatZ. Zn(2+) is required as a cofactor.

The catalysed reaction is D-tagatofuranose 1,6-bisphosphate = D-glyceraldehyde 3-phosphate + dihydroxyacetone phosphate. It participates in carbohydrate metabolism; D-tagatose 6-phosphate degradation; D-glyceraldehyde 3-phosphate and glycerone phosphate from D-tagatose 6-phosphate: step 2/2. Catalytic subunit of the tagatose-1,6-bisphosphate aldolase GatYZ, which catalyzes the reversible aldol condensation of dihydroxyacetone phosphate (DHAP or glycerone-phosphate) with glyceraldehyde 3-phosphate (G3P) to produce tagatose 1,6-bisphosphate (TBP). Requires GatZ subunit for full activity and stability. Is involved in the catabolism of galactitol. The chain is D-tagatose-1,6-bisphosphate aldolase subunit GatY from Klebsiella pneumoniae subsp. pneumoniae (strain ATCC 700721 / MGH 78578).